Here is a 94-residue protein sequence, read N- to C-terminus: Acylphosphatase (94 aa).

An Acylphosphatase-like domain is found at 8–94 (ALHVIVKGRV…RGYTDFRIEV (87 aa)). Active-site residues include Arg-23 and Asn-41.

The protein belongs to the acylphosphatase family.

The enzyme catalyses an acyl phosphate + H2O = a carboxylate + phosphate + H(+). This chain is Acylphosphatase (acyP), found in Treponema denticola (strain ATCC 35405 / DSM 14222 / CIP 103919 / JCM 8153 / KCTC 15104).